Here is a 339-residue protein sequence, read N- to C-terminus: NADH-quinone oxidoreductase subunit H (339 aa).

9 helical membrane passes run 9-29 (IFPL…LILC), 50-70 (PNVV…KLLF), 82-102 (ILFV…WAVI), 115-135 (VGVL…IIAG), 161-181 (MGLV…SQIV), 187-207 (MPWW…ISVL), 235-255 (MGFA…SAMT), 275-295 (IPGF…FLWI), and 311-331 (GWKV…SVLI).

This sequence belongs to the complex I subunit 1 family. As to quaternary structure, NDH-1 is composed of 14 different subunits. Subunits NuoA, H, J, K, L, M, N constitute the membrane sector of the complex.

The protein localises to the cell inner membrane. It catalyses the reaction a quinone + NADH + 5 H(+)(in) = a quinol + NAD(+) + 4 H(+)(out). Its function is as follows. NDH-1 shuttles electrons from NADH, via FMN and iron-sulfur (Fe-S) centers, to quinones in the respiratory chain. The immediate electron acceptor for the enzyme in this species is believed to be ubiquinone. Couples the redox reaction to proton translocation (for every two electrons transferred, four hydrogen ions are translocated across the cytoplasmic membrane), and thus conserves the redox energy in a proton gradient. This subunit may bind ubiquinone. The polypeptide is NADH-quinone oxidoreductase subunit H (Rickettsia bellii (strain RML369-C)).